The following is a 539-amino-acid chain: 3-methylmercaptopropionyl-CoA ligase (539 aa).

T185 is a Mg(2+) binding site. ATP contacts are provided by H231, G303, H324, A325, and S329. E330 is a binding site for Mg(2+). Positions 359, 417, 432, and 523 each coordinate ATP.

It belongs to the ATP-dependent AMP-binding enzyme family. In terms of assembly, homodimer. The cofactor is Mg(2+).

The catalysed reaction is 3-(methylsulfanyl)propanoate + ATP + CoA = 3-(methylsulfanyl)propanoyl-CoA + AMP + diphosphate. It participates in lipid metabolism; fatty acid metabolism. Activated by LiCl and NH(4)Cl. Inhibited by dimethylsulfoniopropionate (DMSP). MMPA concentrations above 2 mM relieve the DMSP inhibition and 80% of activity is regained at an MMPA concentration of 8 mM. Its function is as follows. Involved in the assimilation of dimethylsulphoniopropionate (DMSP), an important compound in the fixation of carbon in marine phytoplankton. Catalyzes the ATP-dependent ligation of methylmercaptopropionate (MMPA) and CoA to yield methylmercaptopropionate-CoA (MMPA-CoA). It is also active with short-chain-fatty-acid (carboxylic acids up to six carbons in length). The polypeptide is 3-methylmercaptopropionyl-CoA ligase (Ruegeria pomeroyi (strain ATCC 700808 / DSM 15171 / DSS-3) (Silicibacter pomeroyi)).